Here is a 760-residue protein sequence, read N- to C-terminus: Anti-sigma-I factor RsgI6 (760 aa).

The Cytoplasmic segment spans residues 1–55 (MIVGKVLDMDEKTAIIMTDDFAFLNVVRTSEMAVGKKVKVLDSDIIKPKNSLRRY). The RsgI N-terminal anti-sigma domain maps to 2–49 (IVGKVLDMDEKTAIIMTDDFAFLNVVRTSEMAVGKKVKVLDSDIIKPK). A helical membrane pass occupies residues 56 to 76 (LPVAAVAACFVIVLSFVLMFI). The Extracellular portion of the chain corresponds to 77 to 760 (NGNTARKNIY…GTLQTTYRIP (684 aa)). A disordered region spans residues 274 to 352 (AINTGPAESA…STPKPVSPVQ (79 aa)). Residues 291-352 (LPATSTPGRT…STPKPVSPVQ (62 aa)) show a composition bias toward polar residues. The region spanning 402–701 (DSSNKPIENA…NEAGRRFESL (300 aa)) is the GH10 domain. Residue Glu-538 is the Proton donor of the active site. Residue Glu-635 is the Nucleophile of the active site.

It in the C-terminal section; belongs to the glycosyl hydrolase 10 (cellulase F) family. As to quaternary structure, interacts (via RsgI N-terminal anti-sigma domain) with SigI6.

The protein localises to the cell membrane. It catalyses the reaction Endohydrolysis of (1-&gt;4)-beta-D-xylosidic linkages in xylans.. It functions in the pathway glycan degradation; xylan degradation. Its function is as follows. Anti-sigma factor for SigI6. Negatively regulates SigI6 activity through direct interaction. Binding of the polysaccharide substrate to the extracellular C-terminal sensing domain of RsgI6 may induce a conformational change in its N-terminal cytoplasmic region, leading to the release and activation of SigI6. Binds to and hydrolyzes insoluble and soluble xylan substrates. Has low enzymatic activity. This is Anti-sigma-I factor RsgI6 from Acetivibrio thermocellus (strain ATCC 27405 / DSM 1237 / JCM 9322 / NBRC 103400 / NCIMB 10682 / NRRL B-4536 / VPI 7372) (Clostridium thermocellum).